A 346-amino-acid chain; its full sequence is Tyrosine--tRNA ligase (346 aa).

Y35 provides a ligand contact to L-tyrosine. The short motif at 40-48 (PTGEMHIGH) is the 'HIGH' region element. L-tyrosine-binding residues include Y162, Q166, D169, and Q184.

Belongs to the class-I aminoacyl-tRNA synthetase family. TyrS type 3 subfamily. As to quaternary structure, homodimer.

The protein localises to the cytoplasm. It catalyses the reaction tRNA(Tyr) + L-tyrosine + ATP = L-tyrosyl-tRNA(Tyr) + AMP + diphosphate + H(+). Catalyzes the attachment of tyrosine to tRNA(Tyr) in a two-step reaction: tyrosine is first activated by ATP to form Tyr-AMP and then transferred to the acceptor end of tRNA(Tyr). The chain is Tyrosine--tRNA ligase from Haloarcula marismortui (strain ATCC 43049 / DSM 3752 / JCM 8966 / VKM B-1809) (Halobacterium marismortui).